We begin with the raw amino-acid sequence, 470 residues long: Flavin-containing monooxygenase FMO GS-OX-like 6 (470 aa).

17-22 (GAGAAG) lines the FAD pocket. 214-219 (GYQSSG) provides a ligand contact to NADP(+).

It belongs to the FMO family. FAD is required as a cofactor.

Functionally, catalyzes the conversion of methylthioalkyl glucosinolates of any chain length into methylsulfinylalkyl glucosinolates. The protein is Flavin-containing monooxygenase FMO GS-OX-like 6 of Arabidopsis thaliana (Mouse-ear cress).